Here is a 720-residue protein sequence, read N- to C-terminus: DNA ligase (720 aa).

NAD(+) contacts are provided by residues 57-61 (DAEYD), 106-107 (SL), and Glu140. Residue Lys142 is the N6-AMP-lysine intermediate of the active site. The NAD(+) site is built by Arg163, Glu200, Lys316, and Lys340. The Zn(2+) site is built by Cys434, Cys437, Cys458, and Cys464. The 78-residue stretch at 643 to 720 (AAASPVSGKT…TEDEWFELVG (78 aa)) folds into the BRCT domain.

The protein belongs to the NAD-dependent DNA ligase family. LigA subfamily. Mg(2+) serves as cofactor. The cofactor is Mn(2+).

The catalysed reaction is NAD(+) + (deoxyribonucleotide)n-3'-hydroxyl + 5'-phospho-(deoxyribonucleotide)m = (deoxyribonucleotide)n+m + AMP + beta-nicotinamide D-nucleotide.. Functionally, DNA ligase that catalyzes the formation of phosphodiester linkages between 5'-phosphoryl and 3'-hydroxyl groups in double-stranded DNA using NAD as a coenzyme and as the energy source for the reaction. It is essential for DNA replication and repair of damaged DNA. The protein is DNA ligase of Xanthobacter autotrophicus (strain ATCC BAA-1158 / Py2).